Reading from the N-terminus, the 159-residue chain is Cyclic pyranopterin monophosphate synthase (159 aa).

Residues 75 to 77 and 113 to 114 contribute to the substrate site; these read LCH and ME. Aspartate 128 is a catalytic residue.

It belongs to the MoaC family. In terms of assembly, homohexamer; trimer of dimers.

It catalyses the reaction (8S)-3',8-cyclo-7,8-dihydroguanosine 5'-triphosphate = cyclic pyranopterin phosphate + diphosphate. Its pathway is cofactor biosynthesis; molybdopterin biosynthesis. Catalyzes the conversion of (8S)-3',8-cyclo-7,8-dihydroguanosine 5'-triphosphate to cyclic pyranopterin monophosphate (cPMP). This Vibrio atlanticus (strain LGP32) (Vibrio splendidus (strain Mel32)) protein is Cyclic pyranopterin monophosphate synthase.